Reading from the N-terminus, the 287-residue chain is Large ribosomal subunit protein uL2 (287 aa).

The disordered stretch occupies residues 221 to 287 (RGSVMNPCDH…SKRSRGGRDS (67 aa)). The segment covering 258–287 (KTRKRNKPSNRFVLRKRRRTSKRSRGGRDS) has biased composition (basic residues).

This sequence belongs to the universal ribosomal protein uL2 family. Part of the 50S ribosomal subunit. Forms a bridge to the 30S subunit in the 70S ribosome.

Functionally, one of the primary rRNA binding proteins. Required for association of the 30S and 50S subunits to form the 70S ribosome, for tRNA binding and peptide bond formation. It has been suggested to have peptidyltransferase activity; this is somewhat controversial. Makes several contacts with the 16S rRNA in the 70S ribosome. This chain is Large ribosomal subunit protein uL2, found in Prochlorococcus marinus (strain MIT 9303).